Reading from the N-terminus, the 353-residue chain is MGRPATPQQTAFHIPFPRAISPDVSAVHPGSMAWLRRHGMLRSDASARRVDGWRLTELAGRFFPDARGEDLRLGADVMGFFFLFDDQFDHPGGLRAEAVAVSKRLLHLTSLPAGPAPEGAGPVVAAWADLWNRSCQGMSSAWRVRAAREWRRYFVGNLEESVAREGMSGESVEDYLRLRAMTIGTTPVYDLCERTQHFEIPDEVLHSHHVQAMRDLATEIVVLCNDVASTIKESARGETLNAVLLLERHHEAERGPAVARVQRMVEARLAAFRRLRDRTSRTCAALDLTAEQCDRVDRYVRTALMSVVRGNYDWQQRSARFSADDARPGSLPGYLDDLVGHSGVVGPPPVDGS.

Mg(2+)-binding residues include aspartate 85 and aspartate 89. The DDXXD motif motif lies at 85–89 (DDQFD). Arginine 179 serves as a coordination point for substrate. The Mg(2+) site is built by asparagine 225 and serine 229. Lysine 232 is a binding site for substrate. Mg(2+) is bound at residue glutamate 233. 320–321 (RF) is a substrate binding site.

This sequence belongs to the terpene synthase family. Requires Mg(2+) as cofactor.

The enzyme catalyses (2E,6E)-farnesyl diphosphate = (-)-(E)-beta-caryophyllene + diphosphate. Its pathway is secondary metabolite biosynthesis; terpenoid biosynthesis. Functionally, catalyzes the conversion of (2E,6E)-farnesyl diphosphate (FPP) to yield the bicyclic sesquiterpene (2S,10R)-(-)-(E)-beta-caryophyllene via a probable 1,10-cyclization, which could involve the abstraction of the pyrophosphate from FPP to yield a (E,E)-germacradienyl cation. In Saccharothrix espanaensis (strain ATCC 51144 / DSM 44229 / JCM 9112 / NBRC 15066 / NRRL 15764), this protein is (-)-beta-caryophyllene synthase ((2E,6E)-farnesyl diphosphate cyclizing) (ptlA).